Consider the following 807-residue polypeptide: Glycerol-3-phosphate acyltransferase (807 aa).

The HXXXXD motif motif lies at 305 to 310 (CHRSHM).

It belongs to the GPAT/DAPAT family.

The protein resides in the cell inner membrane. The enzyme catalyses sn-glycerol 3-phosphate + an acyl-CoA = a 1-acyl-sn-glycero-3-phosphate + CoA. The protein operates within phospholipid metabolism; CDP-diacylglycerol biosynthesis; CDP-diacylglycerol from sn-glycerol 3-phosphate: step 1/3. The protein is Glycerol-3-phosphate acyltransferase of Aliivibrio fischeri (strain ATCC 700601 / ES114) (Vibrio fischeri).